A 103-amino-acid polypeptide reads, in one-letter code: Large ribosomal subunit protein mL63 (103 aa).

Belongs to the mitochondrion-specific ribosomal protein mL63 family.

Its subcellular location is the mitochondrion. This is Large ribosomal subunit protein mL63 (mrpl57) from Danio rerio (Zebrafish).